Reading from the N-terminus, the 457-residue chain is Nuclear distribution protein PAC1 (457 aa).

The stretch at 73-106 (SSIVRLQRRIIELEKEIQELTDENENLRENGPSS) forms a coiled coil. WD repeat units lie at residues 126–165 (SAGASVTSVKLHPELPLVFIATDAGKLQCYDLMNYTMPVA), 169–211 (AHMR…LQLI), 216–257 (GHEH…CLKS), 260–299 (PHTEWVRCLDVMGDFVVTGSNDCTVRLSHWPTGRSLSFGT), 322–362 (SHRF…FVAH), 382–419 (GHSSWVRDVRVRGKHAFSCSDDRSIKVWDLSTCEVVRS), and 423–457 (LHSGFINCIDIDCGGLNRQLLVSGGADGKLVILMK).

This sequence belongs to the WD repeat LIS1/nudF family. As to quaternary structure, self-associates. Interacts with NDL1 and dynein.

Its subcellular location is the cytoplasm. It localises to the cytoskeleton. The protein localises to the spindle pole. In terms of biological role, positively regulates the activity of the minus-end directed microtubule motor protein dynein. Plays a central role in positioning the mitotic spindle at the bud neck during cell division. Targets cytoplasmic dynein to microtubule plus ends, thereby promoting dynein-mediated microtubule sliding along the bud cortex and consequently the movement of the mitotic spindle to the bud neck. This Lachancea thermotolerans (strain ATCC 56472 / CBS 6340 / NRRL Y-8284) (Yeast) protein is Nuclear distribution protein PAC1.